The sequence spans 1040 residues: MDWLLFRNICLLILFMVVLGVNSEFIVEVKELDIENGTTTWQTVRRQKREWIKFAAACREGEDNSKRNPIARIRSDCEVSQRITYRISGAGIDRPPYGVFTINPRTGEINITSVVDREITPLFLIHCRALNSRGEDLERPLELRVKVMDVNDNPPVFTQNVYTANIEENSDANALVVKLSATDADEDNHLNSKIAYKIISQEPAGAPMFMVNRYTGEVRTMSNFLDREQHSMYNLLVRGSDRDGATDGLSSECDCRIKILDVNDNFPILEKTSYSASIEENCLSSELIRLQAIDLDEEGTDNWLAQYSILSGNDGNWFEIQTDPKTNEGILKLVKMLDYEQEPNIYLSIGVRNQAEFHHSVASQFQMHSTPVRIQVINVREGPTFRPSSMTFSLRGGMRGDSLMNYVLGTYTAIDMDTGSPATNVRYVIGHDAGSWLKVDSRTGEIQFSREFDTKSKYITDGMYAAEILAIDDGSGRTATGTICIEVPDANDYCPVIYAESRSVCTHASSVRIYVNDHSFGAPFTFCVVDESPDTADIWDIRSINGTSAILMTEQTLSPGPYQIPILVKDSHNRACELPQTVLLDACLCDDYHVCLHSSTTGIYTGDTIWVTDDMGTVTDDGLRQSNVGLGPAGIGMIILGLLLLFLSPLLLLMCCCKRRQPEGLGTRFAPVPEGGEGVMQPWRIEGAHPEDRDVSNICVPMTASNTQDRIDSSEIYTNTYAGGGTVEGGVSGVELNTGVGTAAGIAAGGATGTLRKRSSTIGTLREYQDTGMNMAFLDSYFSEKAYAYADEDEGRPANDCLLIYDHEGTGSPVGSIGCCSWIVDDLDESYMETLDPKFRTLAEICLDTEIEPFPSHQACIPISTDLPLLGPNYFVNESSGMTLSEAEFQAEMAAASEPMIHGDIIVTETYTATDPCVQPTTIVFDSQLPPNVVVTETVMAPVYDVQGNICVPAEIANTHNVYYAERVVASPGVPDMGNGNIGDTCIGPVMSGGILVGPEIQVTQMMSPDIHISQTTRSTSPMTSQHRVTRYSNIHYSRQ.

Positions 1 to 23 (MDWLLFRNICLLILFMVVLGVNS) are cleaved as a signal peptide. A propeptide spanning residues 24-49 (EFIVEVKELDIENGTTTWQTVRRQKR) is cleaved from the precursor. 4 Cadherin domains span residues 50-157 (EWIK…PPVF), 158-269 (TQNV…FPIL), 270-385 (EKTS…GPTF), and 389-497 (SMTF…CPVI). The Extracellular segment spans residues 50 to 633 (EWIKFAAACR…RQSNVGLGPA (584 aa)). Residue Asn-110 is glycosylated (N-linked (GlcNAc...) asparagine). N-linked (GlcNAc...) asparagine glycosylation is present at Asn-545. Residues 634 to 654 (GIGMIILGLLLLFLSPLLLLM) form a helical membrane-spanning segment. At 655-1040 (CCCKRRQPEG…RYSNIHYSRQ (386 aa)) the chain is on the cytoplasmic side. 2 Desmoglein repeat repeats span residues 883–909 (TLSE…IVTE) and 910–940 (TYTA…ETVM). Residues 1015 to 1040 (QTTRSTSPMTSQHRVTRYSNIHYSRQ) form a disordered region.

As to quaternary structure, interacts with JUP.

The protein resides in the cell membrane. The protein localises to the cell junction. It localises to the desmosome. Its function is as follows. A component of desmosome cell-cell junctions which are required for positive regulation of cellular adhesion. Coordinates the transition from proliferation to differentiation in hair follicle keratinocytes. Plays a role in moderating lymphocyte migration to inflamed skin and maintaining homeostasis of the epidermal inflammatory response. This Rattus norvegicus (Rat) protein is Desmoglein-4 (Dsg4).